Here is a 426-residue protein sequence, read N- to C-terminus: Tryptophan--tRNA ligase (426 aa).

Residues 66–74 (PSGEMHLGN) carry the 'HIGH' region motif. The short motif at 314–318 (KMSSS) is the 'KMSKS' region element.

Belongs to the class-I aminoacyl-tRNA synthetase family.

Its subcellular location is the cytoplasm. It catalyses the reaction tRNA(Trp) + L-tryptophan + ATP = L-tryptophyl-tRNA(Trp) + AMP + diphosphate + H(+). In Thermoplasma volcanium (strain ATCC 51530 / DSM 4299 / JCM 9571 / NBRC 15438 / GSS1), this protein is Tryptophan--tRNA ligase.